Consider the following 277-residue polypeptide: Myelin proteolipid protein (277 aa).

At 2–10 (GLLECCARC) the chain is on the cytoplasmic side. S-palmitoyl cysteine attachment occurs at residues Cys-6, Cys-7, and Cys-10. The helical transmembrane segment at 11–36 (LIGAPFASLVATGLCFFGVALFCGCG) threads the bilayer. At 37–59 (HEALTGTEQLIETYFSKNYQDYE) the chain is on the extracellular side. The chain crosses the membrane as a helical span at residues 60–88 (YLIDVIHAFQYVIYGTASFFFLYGALLLA). The Cytoplasmic portion of the chain corresponds to 89-151 (EGFYTTGAVR…LGKWLGHPDK (63 aa)). S-palmitoyl cysteine attachment occurs at residues Cys-109, Cys-139, and Cys-141. A helical membrane pass occupies residues 152-178 (FVGITYVLTIVWLLAFACSAVPVYIYF). At 179-238 (NTWTTCQSIAFPTKTTASIGTLCADARMYGVLPWNAFPGKVCGSNLLSICKTSEFQMTFH) the chain is on the extracellular side. Disulfide bonds link Cys-184/Cys-228 and Cys-201/Cys-220. Residue Thr-199 is the site of O-palmitoyl threonine attachment. Residues 239-268 (LFIAAFVGAAATLVSLLTFMIAATYNFAVL) form a helical membrane-spanning segment. The Cytoplasmic segment spans residues 269–277 (KLMGRGTKF).

Belongs to the myelin proteolipid protein family.

The protein localises to the cell membrane. Its function is as follows. This is the major myelin protein from the central nervous system. It plays an important role in the formation or maintenance of the multilamellar structure of myelin. The sequence is that of Myelin proteolipid protein (PLP1) from Gallus gallus (Chicken).